The primary structure comprises 175 residues: Large ribosomal subunit protein uL15 (175 aa).

Residues 1-13 show a composition bias toward basic and acidic residues; that stretch reads MTIKLNELRDNNG. Disordered stretches follow at residues 1–44 and 150–175; these read MTIK…KARS and VELP…AKNA. Residues 23–37 are compositionally biased toward gly residues; the sequence is RGIGSGKGKTAGRGQ.

The protein belongs to the universal ribosomal protein uL15 family. As to quaternary structure, part of the 50S ribosomal subunit.

Its function is as follows. Binds to the 23S rRNA. This is Large ribosomal subunit protein uL15 from Sphingopyxis alaskensis (strain DSM 13593 / LMG 18877 / RB2256) (Sphingomonas alaskensis).